The following is a 213-amino-acid chain: MKTKILLLNFIIIFFLINVNLAIKKDSPFKEIQKNNNNKKENHDAINYYEDEDGFDVTIKDCISILVPYGKCTKIKSPFKKCPYKSIFISSNSTTPIIPNNNYNNNNNNKNKNNGSNQYIINLFENSKCYEKVNRNKNKIFKNFHEEKNYKESKKNELIINCKDKKLNKFNNNEIRVVCPISSKFDSSTSSISINTLAILSLLFLIFINKLIN.

The N-terminal stretch at 1–22 is a signal peptide; it reads MKTKILLLNFIIIFFLINVNLA. Topologically, residues 23–191 are extracellular; that stretch reads IKKDSPFKEI…SSKFDSSTSS (169 aa). Residues Asn92 and Asn114 are each glycosylated (N-linked (GlcNAc...) asparagine). The chain crosses the membrane as a helical span at residues 192 to 212; that stretch reads ISINTLAILSLLFLIFINKLI. Asn213 is a topological domain (cytoplasmic).

The protein localises to the membrane. The chain is Putative transmembrane protein DDB_G0267860 from Dictyostelium discoideum (Social amoeba).